Here is a 184-residue protein sequence, read N- to C-terminus: uncharacterized protein (184 aa).

A disordered region spans residues 130-149 (DKDDDKKKKKKDDKKDDPCN).

It localises to the virion. This is an uncharacterized protein from Acanthamoeba polyphaga (Amoeba).